Reading from the N-terminus, the 1128-residue chain is GTPase-activating protein BEM3 (1128 aa).

The tract at residues Ser-194–Pro-241 is disordered. Polar residues predominate over residues Ala-209–Pro-230. Ser-254 bears the Phosphoserine mark. Disordered regions lie at residues Glu-345 to Ser-391 and Pro-418 to Ala-486. Positions Leu-366–Phe-375 are enriched in pro residues. Composition is skewed to polar residues over residues Gly-382 to Ser-391 and Leu-420 to Leu-478. Residues Asp-634–Asp-741 enclose the PH domain. Disordered regions lie at residues Leu-746 to Ile-777 and Asn-796 to Arg-838. Residues Arg-752 to Ser-764 show a composition bias toward polar residues. A compositionally biased stretch (low complexity) spans Asn-796–Asn-815. A compositionally biased stretch (polar residues) spans Pro-816 to Asn-829. The 216-residue stretch at Leu-913–Val-1128 folds into the Rho-GAP domain.

The protein localises to the cytoplasm. Its function is as follows. GTPase-activating protein (GAP) for CDC42 and less efficiently for RHO1. Negative regulator of the pheromone-response pathway through the STE20 protein kinase. The protein is GTPase-activating protein BEM3 (BEM3) of Saccharomyces cerevisiae (strain ATCC 204508 / S288c) (Baker's yeast).